The chain runs to 427 residues: Acetylornithine aminotransferase, mitochondrial (427 aa).

N6-(pyridoxal phosphate)lysine is present on K279.

This sequence belongs to the class-III pyridoxal-phosphate-dependent aminotransferase family. Pyridoxal 5'-phosphate serves as cofactor.

The protein resides in the mitochondrion matrix. It catalyses the reaction N(2)-acetyl-L-ornithine + 2-oxoglutarate = N-acetyl-L-glutamate 5-semialdehyde + L-glutamate. It functions in the pathway amino-acid biosynthesis; L-arginine biosynthesis; N(2)-acetyl-L-ornithine from L-glutamate: step 4/4. This Candida glabrata (strain ATCC 2001 / BCRC 20586 / JCM 3761 / NBRC 0622 / NRRL Y-65 / CBS 138) (Yeast) protein is Acetylornithine aminotransferase, mitochondrial (ARG8).